The primary structure comprises 662 residues: Bifunctional polymyxin resistance protein ArnA (662 aa).

The interval 1 to 307 is formyltransferase ArnAFT; that stretch reads MTSKAVVFAY…ELGLVEGARL (307 aa). The active-site Proton donor; for formyltransferase activity is histidine 106. (6R)-10-formyltetrahydrofolate is bound by residues arginine 116 and 138–142; that span reads IERAD. A dehydrogenase ArnADH region spans residues 316-662; that stretch reads RRTRVLILGV…EALREREAQA (347 aa). NAD(+) is bound by residues aspartate 349 and 370 to 371; that span reads DI. UDP-alpha-D-glucuronate contacts are provided by residues alanine 395, tyrosine 400, and 434 to 435; that span reads TS. Glutamate 436 functions as the Proton acceptor; for decarboxylase activity in the catalytic mechanism. UDP-alpha-D-glucuronate-binding positions include arginine 462, asparagine 493, 527–536, and tyrosine 614; that span reads RLVDGGAQKR. The Proton donor; for decarboxylase activity role is filled by arginine 620.

In the N-terminal section; belongs to the Fmt family. UDP-L-Ara4N formyltransferase subfamily. It in the C-terminal section; belongs to the NAD(P)-dependent epimerase/dehydratase family. UDP-glucuronic acid decarboxylase subfamily. Homohexamer, formed by a dimer of trimers.

The enzyme catalyses UDP-alpha-D-glucuronate + NAD(+) = UDP-beta-L-threo-pentopyranos-4-ulose + CO2 + NADH. The catalysed reaction is UDP-4-amino-4-deoxy-beta-L-arabinose + (6R)-10-formyltetrahydrofolate = UDP-4-deoxy-4-formamido-beta-L-arabinose + (6S)-5,6,7,8-tetrahydrofolate + H(+). It participates in nucleotide-sugar biosynthesis; UDP-4-deoxy-4-formamido-beta-L-arabinose biosynthesis; UDP-4-deoxy-4-formamido-beta-L-arabinose from UDP-alpha-D-glucuronate: step 1/3. It functions in the pathway nucleotide-sugar biosynthesis; UDP-4-deoxy-4-formamido-beta-L-arabinose biosynthesis; UDP-4-deoxy-4-formamido-beta-L-arabinose from UDP-alpha-D-glucuronate: step 3/3. The protein operates within bacterial outer membrane biogenesis; lipopolysaccharide biosynthesis. In terms of biological role, bifunctional enzyme that catalyzes the oxidative decarboxylation of UDP-glucuronic acid (UDP-GlcUA) to UDP-4-keto-arabinose (UDP-Ara4O) and the addition of a formyl group to UDP-4-amino-4-deoxy-L-arabinose (UDP-L-Ara4N) to form UDP-L-4-formamido-arabinose (UDP-L-Ara4FN). The modified arabinose is attached to lipid A and is required for resistance to polymyxin and cationic antimicrobial peptides. This chain is Bifunctional polymyxin resistance protein ArnA, found in Pseudomonas aeruginosa (strain ATCC 15692 / DSM 22644 / CIP 104116 / JCM 14847 / LMG 12228 / 1C / PRS 101 / PAO1).